The following is a 369-amino-acid chain: Cytoplasmic tRNA 2-thiolation protein 1 (369 aa).

Belongs to the TtcA family. CTU1/NCS6/ATPBD3 subfamily.

The protein resides in the cytoplasm. It functions in the pathway tRNA modification; 5-methoxycarbonylmethyl-2-thiouridine-tRNA biosynthesis. Plays a central role in 2-thiolation of mcm(5)S(2)U at tRNA wobble positions of tRNA(Lys), tRNA(Glu) and tRNA(Gln). Directly binds tRNAs and probably acts by catalyzing adenylation of tRNAs, an intermediate required for 2-thiolation. It is unclear whether it acts as a sulfurtransferase that transfers sulfur from thiocarboxylated URM1 onto the uridine of tRNAs at wobble position. Prior mcm(5) tRNA modification by the elongator complex is required for 2-thiolation. May also be involved in protein urmylation. In Meyerozyma guilliermondii (strain ATCC 6260 / CBS 566 / DSM 6381 / JCM 1539 / NBRC 10279 / NRRL Y-324) (Yeast), this protein is Cytoplasmic tRNA 2-thiolation protein 1.